A 600-amino-acid chain; its full sequence is MCGIVGYIGTEDAKEILLKGLEKLEYRGYDSAGIAVATEEGVHIFKEKGRIATLREVVDQGVKSTVGIGHTRWATHGEPSKVNAHPHQSESSRFTIVHNGVIENYEQLKRDYLQAVTLQSDTDTEVVVQLVERFVHEGQSVEAAFRHTLSLLKGSYAIALLDKKDTDTIYVGKNKSPLLVGVQDGVNVVASDAMAMLQVTDQFLEIMDEEIVIVTKDDVTIKTLDGTAVSREPYTAELDASDIEKGTYPHFMLKEIDEQPFVIRNIIQKYQNEDGSVRLDEDIRQAVMEADRIYIIAAGTSYHAGLVGKQLIENFAKQPVEVHIASEFLYNMPLLSKRPLFIFISQSGETADSRGVLVEVKKLGYKALTITNVPGSTLSREADFTLHTHAGPEIAVASTKAYTAQMAVLTLLAADTAKAKGIDLGFDPIQELSIVANAMETLCNQKETLEKIARDYLAVTRNCFFIGRATDYFVCLEGALKLKEISYIQAEGFAGGELKHGTIALIEEGTPIVALATQEHVNLSIRGNVKEVAARGAFPCIISMEGLNEEDDTFVLPKVHSHLTPLVSVIPLQLIAYYAALHRGCDVDKPRNLAKSVTVE.

Cys2 serves as the catalytic Nucleophile; for GATase activity. Positions 2–217 constitute a Glutamine amidotransferase type-2 domain; it reads CGIVGYIGTE…DEEIVIVTKD (216 aa). SIS domains follow at residues 283-422 and 452-590; these read IRQA…AKGI and IARD…VDKP. Lys595 serves as the catalytic For Fru-6P isomerization activity.

Homodimer.

The protein localises to the cytoplasm. It carries out the reaction D-fructose 6-phosphate + L-glutamine = D-glucosamine 6-phosphate + L-glutamate. Functionally, catalyzes the first step in hexosamine metabolism, converting fructose-6P into glucosamine-6P using glutamine as a nitrogen source. The protein is Glutamine--fructose-6-phosphate aminotransferase [isomerizing] of Halalkalibacterium halodurans (strain ATCC BAA-125 / DSM 18197 / FERM 7344 / JCM 9153 / C-125) (Bacillus halodurans).